Consider the following 949-residue polypeptide: Piwi-like protein 2 (949 aa).

The segment at 1–125 (MDPTRPPFRG…SLSTRVQQAS (125 aa)) is disordered. The segment covering 115–125 (PSLSTRVQQAS) has biased composition (polar residues). The 113-residue stretch at 366–478 (SVLDIMNILY…LLPELAFMTG (113 aa)) folds into the PAZ domain. The region spanning 644–935 (LLVCLISGTR…LAFLSGQFLH (292 aa)) is the Piwi domain. Residues D721, E759, D791, and H924 contribute to the active site.

It belongs to the argonaute family. Piwi subfamily. In terms of assembly, component of the PET complex. Mg(2+) is required as a cofactor. In terms of processing, methylated on arginine residues; required for the interaction with Tudor domain-containing protein and subsequent localization to the meiotic nuage, also named P granule. In terms of tissue distribution, expressed in oocytes, testis and liver (at protein level).

The protein resides in the cytoplasm. It is found in the nucleus. Functionally, endoribonuclease that plays a central role during spermatogenesis by repressing transposable elements and preventing their mobilization, which is essential for the germline integrity. Plays an essential role in meiotic differentiation of spermatocytes, germ cell differentiation and in self-renewal of spermatogonial stem cells. Acts via the piRNA metabolic process, which mediates the repression of transposable elements during meiosis by forming complexes composed of piRNAs and Piwi proteins and govern the methylation and subsequent repression of transposons. During piRNA biosynthesis, plays a key role in the piRNA amplification loop, also named ping-pong amplification cycle, by acting as a 'slicer-competent' piRNA endoribonuclease that cleaves primary piRNAs, which are then loaded onto 'slicer-incompetent' piwil4. Piwil2 slicing produces a pre-miRNA intermediate, which is then processed in mature piRNAs, and as well as a 16 nucleotide by-product that is degraded. Required for piwil4/miwi2 nuclear localization and association with secondary piRNAs antisense. Represses circadian rhythms by promoting the stability and activity of core clock components BMAL1 and CLOCK. The sequence is that of Piwi-like protein 2 (piwil2) from Xenopus tropicalis (Western clawed frog).